Reading from the N-terminus, the 429-residue chain is Glutamate-1-semialdehyde 2,1-aminomutase 2 (429 aa).

At K267 the chain carries N6-(pyridoxal phosphate)lysine.

This sequence belongs to the class-III pyridoxal-phosphate-dependent aminotransferase family. HemL subfamily. As to quaternary structure, homodimer. The cofactor is pyridoxal 5'-phosphate.

Its subcellular location is the cytoplasm. It carries out the reaction (S)-4-amino-5-oxopentanoate = 5-aminolevulinate. Its pathway is porphyrin-containing compound metabolism; protoporphyrin-IX biosynthesis; 5-aminolevulinate from L-glutamyl-tRNA(Glu): step 2/2. The protein is Glutamate-1-semialdehyde 2,1-aminomutase 2 (gsaB) of Bacillus subtilis (strain 168).